Consider the following 461-residue polypeptide: ATP synthase subunit beta (461 aa).

151–158 (GGAGVGKT) contributes to the ATP binding site.

This sequence belongs to the ATPase alpha/beta chains family. F-type ATPases have 2 components, CF(1) - the catalytic core - and CF(0) - the membrane proton channel. CF(1) has five subunits: alpha(3), beta(3), gamma(1), delta(1), epsilon(1). CF(0) has three main subunits: a(1), b(2) and c(9-12). The alpha and beta chains form an alternating ring which encloses part of the gamma chain. CF(1) is attached to CF(0) by a central stalk formed by the gamma and epsilon chains, while a peripheral stalk is formed by the delta and b chains.

It is found in the cell inner membrane. It catalyses the reaction ATP + H2O + 4 H(+)(in) = ADP + phosphate + 5 H(+)(out). Functionally, produces ATP from ADP in the presence of a proton gradient across the membrane. The catalytic sites are hosted primarily by the beta subunits. The protein is ATP synthase subunit beta of Alteromonas mediterranea (strain DSM 17117 / CIP 110805 / LMG 28347 / Deep ecotype).